We begin with the raw amino-acid sequence, 58 residues long: Small ribosomal subunit protein bS21 (58 aa).

The protein belongs to the bacterial ribosomal protein bS21 family.

This is Small ribosomal subunit protein bS21 from Lactobacillus acidophilus (strain ATCC 700396 / NCK56 / N2 / NCFM).